The sequence spans 480 residues: Acyl-lipid (8-3)-desaturase (480 aa).

Residues 1 to 30 are disordered; sequence MAPHSADTAGLVPSDELRLRTSNSKGPEQE. Residues 33 to 107 enclose the Cytochrome b5 heme-binding domain; the sequence is LKKYTLEDVS…LAKYCIGELV (75 aa). 2 residues coordinate heme: His68 and His90. 2 helical membrane passes run 151 to 171 and 173 to 193; these read IHPHMILKSLFILGGYFASYY and AFFWSSSVLVSLFFALWMGFF. Residues 203–207 carry the Histidine box-1 motif; it reads HDGNH. The Histidine box-2 motif lies at 238-243; sequence HVVGHH. 3 consecutive transmembrane segments (helical) span residues 280 to 300, 322 to 342, and 348 to 368; these read IYLAVLYGTLALKSIFLDDFL, IFFQGKLLYAFYMFVLPSVYG, and TFLALYVASQLITGWMLAFLF. The Histidine box-3 signature appears at 419-423; the sequence is QIEHH.

This sequence belongs to the fatty acid desaturase type 1 family. It depends on Fe(2+) as a cofactor.

It localises to the membrane. The catalysed reaction is an (8Z,11Z,14Z)-icosatrienoyl-containing glycerolipid + 2 Fe(II)-[cytochrome b5] + O2 + 2 H(+) = (5Z,8Z,11Z,14Z)-eicosatetraenoyl-containing glycerolipid + 2 Fe(III)-[cytochrome b5] + 2 H2O. It catalyses the reaction an (8Z,11Z,14Z,17Z)-eicosatetraenoyl-containing glycerolipid + 2 Fe(II)-[cytochrome b5] + O2 + 2 H(+) = a (5Z,8Z,11Z,14Z,17Z)-eicosapentaenoyl-containing glycerolipid + 2 Fe(III)-[cytochrome b5] + 2 H2O. In terms of biological role, fatty acid desaturase that introduces a cis double bond at the 5-position in 20-carbon polyunsaturated fatty acids incorporated in a glycerolipid that contain a Delta(8) double bond. This Physcomitrium patens (Spreading-leaved earth moss) protein is Acyl-lipid (8-3)-desaturase.